A 289-amino-acid polypeptide reads, in one-letter code: Proteasome subunit beta (289 aa).

The propeptide at 1–59 (MEHTPRNAGFALPAAYMSTMTSSFIDFLKAEAPDLLPRARVENMPAVPGGGSAFEPPHG) is removed in mature form; by autocatalysis. Thr60 serves as the catalytic Nucleophile.

This sequence belongs to the peptidase T1B family. As to quaternary structure, the 20S proteasome core is composed of 14 alpha and 14 beta subunits that assemble into four stacked heptameric rings, resulting in a barrel-shaped structure. The two inner rings, each composed of seven catalytic beta subunits, are sandwiched by two outer rings, each composed of seven alpha subunits. The catalytic chamber with the active sites is on the inside of the barrel. Has a gated structure, the ends of the cylinder being occluded by the N-termini of the alpha-subunits. Is capped by the proteasome-associated ATPase, ARC.

It localises to the cytoplasm. It catalyses the reaction Cleavage of peptide bonds with very broad specificity.. It participates in protein degradation; proteasomal Pup-dependent pathway. Its activity is regulated as follows. The formation of the proteasomal ATPase ARC-20S proteasome complex, likely via the docking of the C-termini of ARC into the intersubunit pockets in the alpha-rings, may trigger opening of the gate for substrate entry. Interconversion between the open-gate and close-gate conformations leads to a dynamic regulation of the 20S proteasome proteolysis activity. Component of the proteasome core, a large protease complex with broad specificity involved in protein degradation. This is Proteasome subunit beta from Saccharomonospora viridis (strain ATCC 15386 / DSM 43017 / JCM 3036 / CCUG 5913 / NBRC 12207 / NCIMB 9602 / P101) (Thermoactinomyces viridis).